The sequence spans 373 residues: Glutamate 5-kinase (373 aa).

Lys15 lines the ATP pocket. Substrate-binding residues include Ser55, Asp142, and Asn154. Residues 174–175 (TD) and 216–222 (TGGMVTK) each bind ATP. Residues 281 to 359 (SGRVIVDDGA…GEIEAILGYK (79 aa)) form the PUA domain.

It belongs to the glutamate 5-kinase family.

The protein localises to the cytoplasm. It catalyses the reaction L-glutamate + ATP = L-glutamyl 5-phosphate + ADP. Its pathway is amino-acid biosynthesis; L-proline biosynthesis; L-glutamate 5-semialdehyde from L-glutamate: step 1/2. Its function is as follows. Catalyzes the transfer of a phosphate group to glutamate to form L-glutamate 5-phosphate. The sequence is that of Glutamate 5-kinase from Geobacter metallireducens (strain ATCC 53774 / DSM 7210 / GS-15).